A 99-amino-acid polypeptide reads, in one-letter code: Carboxysome shell vertex protein CcmL (99 aa).

Positions 1 to 83 (MRIAKVRGTV…VDAAVIAIID (83 aa)) constitute a BMV domain.

Belongs to the CcmL/EutN family. CcmL subfamily. Homopentamer. Interacts with full-length CcmM.

The protein localises to the carboxysome. In terms of biological role, probably forms vertices in the carboxysome, a polyhedral inclusion where RuBisCO (ribulose bisphosphate carboxylase, rbcL-rbcS) is sequestered. Has been modeled to induce curvature upon insertion into an otherwise flat hexagonal molecular layer of CcmK subunits. Its function is as follows. Beta-carboxysome assembly initiates when soluble RuBisCO is condensed into a liquid matrix in a pre-carboxysome by the RbcS-like domains of probably both CcmM58 and CcmM35. CcmN interacts with the N-terminus of CcmM58, and then recruits the CcmK2 major shell protein via CcmN's encapsulation peptide. Shell formation requires CcmK proteins and CcmO. CcmL caps the otherwise elongated carboxysome. Once fully encapsulated carboxysomes are formed, they migrate within the cell probably via interactions with the cytoskeleton. The protein is Carboxysome shell vertex protein CcmL of Synechococcus elongatus (strain ATCC 33912 / PCC 7942 / FACHB-805) (Anacystis nidulans R2).